The sequence spans 102 residues: Small ribosomal subunit protein uS10 (102 aa).

Residues 33–59 (RMSGPIPLPTKRIRITTRKSPDGEGSA) form a disordered region.

The protein belongs to the universal ribosomal protein uS10 family. Part of the 30S ribosomal subunit.

In terms of biological role, involved in the binding of tRNA to the ribosomes. This is Small ribosomal subunit protein uS10 from Pyrococcus furiosus (strain ATCC 43587 / DSM 3638 / JCM 8422 / Vc1).